Reading from the N-terminus, the 385-residue chain is Lysine 6-dehydrogenase (385 aa).

This sequence belongs to the saccharopine dehydrogenase family. Homohexamer.

It catalyses the reaction L-lysine + NAD(+) = L-1-piperideine-6-carboxylate + NH4(+) + NADH + 2 H(+). Catalyzes the oxidative deamination of L-lysine in the presence of NAD. Can also use (S)-(2-aminoethyl)-L-cysteine as a substrate, but more slowly. Can use both NAD and NADP but the preferred substrate is NAD. This is Lysine 6-dehydrogenase (lysDH) from Geobacillus stearothermophilus (Bacillus stearothermophilus).